Reading from the N-terminus, the 197-residue chain is Beta-crystallin A2 (197 aa).

The interval 1 to 11 (MSSAPAPGSAP) is N-terminal arm. 2 Beta/gamma crystallin 'Greek key' domains span residues 12–52 (VCLT…KVEN) and 53–99 (GAWV…RPVL). Residues 100-105 (CANHSD) form a connecting peptide region. 2 consecutive Beta/gamma crystallin 'Greek key' domains span residues 106-147 (SRVT…KVSS) and 148-196 (GAWV…RRVQ).

It belongs to the beta/gamma-crystallin family. Homo/heterodimer, or complexes of higher-order. The structure of beta-crystallin oligomers seems to be stabilized through interactions between the N-terminal arms.

Functionally, crystallins are the dominant structural components of the vertebrate eye lens. The chain is Beta-crystallin A2 (Cryba2) from Mus musculus (Mouse).